The chain runs to 500 residues: Cytochrome P450 6B4 (500 aa).

Cysteine 443 provides a ligand contact to heme.

The protein belongs to the cytochrome P450 family. Requires heme as cofactor.

The protein resides in the endoplasmic reticulum membrane. The protein localises to the microsome membrane. It catalyses the reaction an organic molecule + reduced [NADPH--hemoprotein reductase] + O2 = an alcohol + oxidized [NADPH--hemoprotein reductase] + H2O + H(+). Its function is as follows. Enables the insect to feed on furanocoumarin-producing plants and evolved as an adaptation for detoxification of xanthotoxin and other furanocoumarins. This isozyme metabolizes isopimpinellin, imperatorin, and bergapten at high rates, xanthotoxin and psoralen at intermediate rates and angelicin, sphondin, and trioxsalen only at very low rates. This chain is Cytochrome P450 6B4 (CYP6B4), found in Papilio glaucus (Eastern tiger swallowtail butterfly).